We begin with the raw amino-acid sequence, 95 residues long: Aspartyl/glutamyl-tRNA(Asn/Gln) amidotransferase subunit C (95 aa).

The protein belongs to the GatC family. Heterotrimer of A, B and C subunits.

It catalyses the reaction L-glutamyl-tRNA(Gln) + L-glutamine + ATP + H2O = L-glutaminyl-tRNA(Gln) + L-glutamate + ADP + phosphate + H(+). The catalysed reaction is L-aspartyl-tRNA(Asn) + L-glutamine + ATP + H2O = L-asparaginyl-tRNA(Asn) + L-glutamate + ADP + phosphate + 2 H(+). In terms of biological role, allows the formation of correctly charged Asn-tRNA(Asn) or Gln-tRNA(Gln) through the transamidation of misacylated Asp-tRNA(Asn) or Glu-tRNA(Gln) in organisms which lack either or both of asparaginyl-tRNA or glutaminyl-tRNA synthetases. The reaction takes place in the presence of glutamine and ATP through an activated phospho-Asp-tRNA(Asn) or phospho-Glu-tRNA(Gln). The chain is Aspartyl/glutamyl-tRNA(Asn/Gln) amidotransferase subunit C from Azorhizobium caulinodans (strain ATCC 43989 / DSM 5975 / JCM 20966 / LMG 6465 / NBRC 14845 / NCIMB 13405 / ORS 571).